Here is a 662-residue protein sequence, read N- to C-terminus: Biosynthetic arginine decarboxylase (662 aa).

Position 127 is an N6-(pyridoxal phosphate)lysine (lysine 127). Residue phenylalanine 307–tyrosine 317 coordinates substrate.

Belongs to the Orn/Lys/Arg decarboxylase class-II family. SpeA subfamily. As to quaternary structure, homotetramer. Mg(2+) is required as a cofactor. The cofactor is pyridoxal 5'-phosphate.

The protein resides in the periplasm. The catalysed reaction is L-arginine + H(+) = agmatine + CO2. It participates in amine and polyamine biosynthesis; agmatine biosynthesis; agmatine from L-arginine: step 1/1. In terms of biological role, catalyzes the biosynthesis of agmatine from arginine. The sequence is that of Biosynthetic arginine decarboxylase from Shigella flexneri.